The sequence spans 323 residues: Aldo-keto reductase family 1 member C4 (323 aa).

Residues 20 to 24 (GFGTY) and aspartate 50 each bind NADP(+). Tyrosine 55 (proton donor) is an active-site residue. Histidine 117 contacts substrate. NADP(+) is bound by residues 166 to 167 (SN), glutamine 190, 216 to 221 (HSALGT), and 270 to 280 (KSYNEQRIREN).

Belongs to the aldo/keto reductase family. As to quaternary structure, monomer.

The protein localises to the cytoplasm. It is found in the cytosol. The enzyme catalyses chlordecone alcohol + NADP(+) = chlordecone + NADPH + H(+). It catalyses the reaction a 3alpha-hydroxysteroid + NADP(+) = a 3-oxosteroid + NADPH + H(+). It carries out the reaction a 3alpha-hydroxysteroid + NAD(+) = a 3-oxosteroid + NADH + H(+). The catalysed reaction is 5alpha-androstane-3alpha,17beta-diol + NADP(+) = 17beta-hydroxy-5alpha-androstan-3-one + NADPH + H(+). The enzyme catalyses 5alpha-androstane-3beta,17beta-diol + NADP(+) = 17beta-hydroxy-5alpha-androstan-3-one + NADPH + H(+). It catalyses the reaction 5alpha-androstane-3alpha,17beta-diol + NAD(+) = 17beta-hydroxy-5alpha-androstan-3-one + NADH + H(+). It carries out the reaction 17beta-estradiol + NADP(+) = estrone + NADPH + H(+). The catalysed reaction is 17beta-estradiol + NAD(+) = estrone + NADH + H(+). The enzyme catalyses (20S)-hydroxypregn-4-en-3-one + NADP(+) = progesterone + NADPH + H(+). It catalyses the reaction (20S)-hydroxypregn-4-en-3-one + NAD(+) = progesterone + NADH + H(+). It carries out the reaction androsterone + NADP(+) = 5alpha-androstan-3,17-dione + NADPH + H(+). The catalysed reaction is testosterone + NADP(+) = androst-4-ene-3,17-dione + NADPH + H(+). The enzyme catalyses testosterone + NAD(+) = androst-4-ene-3,17-dione + NADH + H(+). It catalyses the reaction 3alpha-hydroxy-5alpha-androstane 17-O-(beta-D-glucuronate) + NADP(+) = 5alpha-dihydrotestosterone 17-O-(beta-D-glucuronate) + NADPH + H(+). It carries out the reaction (3beta,5alpha,17beta)-3-hydroxy-androstan-17-yl sulfate + NADP(+) = 5alpha-dihydrotestosterone sulfate + NADPH + H(+). The catalysed reaction is 5alpha-androstane-3alpha,17beta-diol + NAD(+) = androsterone + NADH + H(+). Its pathway is steroid metabolism. Functionally, cytosolic aldo-keto reductase that catalyzes the NADH and NADPH-dependent reduction of ketosteroids to hydroxysteroids. Liver specific enzyme that acts as an NAD(P)(H)-dependent 3-, 17- and 20-ketosteroid reductase on the steroid nucleus and side chain. Displays the ability to catalyze both oxidation and reduction in vitro, but most probably acts as a reductase in vivo since the oxidase activity measured in vitro is inhibited by physiological concentration of NADPH. Acts preferentially as a 3-alpha-hydroxysteroid dehydrogenase (HSD) with a subsidiary 3-beta-HSD activity. Catalyzes efficiently the transformation of the potent androgen 5-alpha-dihydrotestosterone (5alpha-DHT or 17beta-hydroxy-5alpha-androstan-3-one) into the less active form, 5-alpha-androstan-3-alpha,17-beta-diol (3-alpha-diol). Catalyzes the reduction of estrone into 17beta-estradiol but with low efficiency. Metabolizes a broad spectrum of natural and synthetic therapeutic steroid and plays an important role in metabolism of androgens, estrogens, progestereone and conjugated steroids. Catalyzes the biotransformation of the pesticide chlordecone (kepone) to its corresponding alcohol leading to increased biliary excretion of the pesticide and concomitant reduction of its neurotoxicity since bile is the major excretory route. In Macaca fascicularis (Crab-eating macaque), this protein is Aldo-keto reductase family 1 member C4 (AKR1C4).